We begin with the raw amino-acid sequence, 153 residues long: Ribonuclease H (153 aa).

Positions 1 to 142 (MLKTIKIFSD…CDHLARESAK (142 aa)) constitute an RNase H type-1 domain. Residues D10, E48, D70, and D134 each coordinate Mg(2+).

The protein belongs to the RNase H family. In terms of assembly, monomer. Mg(2+) serves as cofactor.

It localises to the cytoplasm. It catalyses the reaction Endonucleolytic cleavage to 5'-phosphomonoester.. Endonuclease that specifically degrades the RNA of RNA-DNA hybrids. This chain is Ribonuclease H, found in Buchnera aphidicola subsp. Baizongia pistaciae (strain Bp).